Reading from the N-terminus, the 737-residue chain is Propionyl-CoA carboxylase alpha chain, mitochondrial (737 aa).

A mitochondrion-targeting transit peptide spans M1–S61. The region spanning T71–P518 is the Biotin carboxylation domain. K74 is modified (N6-acetyllysine; alternate). The residue at position 74 (K74) is an N6-succinyllysine; alternate. K128 is modified (N6-succinyllysine). N6-acetyllysine; alternate is present on K159. An N6-succinyllysine; alternate modification is found at K159. K163 is modified (N6-acetyllysine). K186 contributes to the ATP binding site. In terms of domain architecture, ATP-grasp spans K190–K387. K197 carries the N6-succinyllysine modification. An N6-acetyllysine; alternate modification is found at K209. The residue at position 209 (K209) is an N6-succinyllysine; alternate. ATP is bound by residues A218–I279, E270, and N305. Residue S261 is modified to Phosphoserine. K271 carries the post-translational modification N6-succinyllysine. The residue at position 337 (K337) is an N6-acetyllysine; alternate. Position 337 is an N6-succinyllysine; alternate (K337). Mg(2+) is bound by residues E345, E358, and N360. E345, E358, and N360 together coordinate Mn(2+). R362 is a catalytic residue. N6-succinyllysine is present on residues K394 and K416. F418 serves as a coordination point for biotin. K505 carries the N6-acetyllysine modification. N6-succinyllysine is present on residues K511, K522, K567, and K657. Residues F658–E737 form the Biotinyl-binding domain. K703 is subject to N6-biotinyllysine; by HLCS.

As to quaternary structure, the holoenzyme is a dodecamer composed of 6 PCCA/alpha subunits and 6 PCCB/beta subunits. Interacts (via the biotin carboxylation domain) with SIRT4. Interacts with SIRT3 and SIRT5. Requires biotin as cofactor. Mg(2+) serves as cofactor. Mn(2+) is required as a cofactor. In terms of processing, acetylated. The biotin cofactor is covalently attached to the C-terminal biotinyl-binding domain and is required for the catalytic activity. Biotinylation is catalyzed by HLCS.

It is found in the mitochondrion matrix. It catalyses the reaction propanoyl-CoA + hydrogencarbonate + ATP = (S)-methylmalonyl-CoA + ADP + phosphate + H(+). The enzyme catalyses butanoyl-CoA + hydrogencarbonate + ATP = (2S)-ethylmalonyl-CoA + ADP + phosphate + H(+). The protein operates within metabolic intermediate metabolism; propanoyl-CoA degradation; succinyl-CoA from propanoyl-CoA: step 1/3. In terms of biological role, this is one of the 2 subunits of the biotin-dependent propionyl-CoA carboxylase (PCC), a mitochondrial enzyme involved in the catabolism of odd chain fatty acids, branched-chain amino acids isoleucine, threonine, methionine, and valine and other metabolites. Propionyl-CoA carboxylase catalyzes the carboxylation of propionyl-CoA/propanoyl-CoA to D-methylmalonyl-CoA/(S)-methylmalonyl-CoA. Within the holoenzyme, the alpha subunit catalyzes the ATP-dependent carboxylation of the biotin carried by the biotin carboxyl carrier (BCC) domain, while the beta subunit then transfers the carboxyl group from carboxylated biotin to propionyl-CoA. Propionyl-CoA carboxylase also significantly acts on butyryl-CoA/butanoyl-CoA, which is converted to ethylmalonyl-CoA/(2S)-ethylmalonyl-CoA. Other alternative minor substrates include (2E)-butenoyl-CoA/crotonoyl-CoA. This chain is Propionyl-CoA carboxylase alpha chain, mitochondrial, found in Rattus norvegicus (Rat).